A 615-amino-acid polypeptide reads, in one-letter code: Probable ATP-citrate synthase subunit 1 (615 aa).

Residues 221-241 (LIRF…EVGG) and 272-298 (FKTE…KNQA) each bind ATP. Glu238 serves as a coordination point for Mg(2+). His280 serves as the catalytic Tele-phosphohistidine intermediate. Residue 299 to 309 (MREAGIYVPET) coordinates CoA. Residue Ser359 is modified to Phosphoserine.

This sequence belongs to the succinate/malate CoA ligase alpha subunit family. As to quaternary structure, composed of two subunits.

It localises to the cytoplasm. It catalyses the reaction oxaloacetate + acetyl-CoA + ADP + phosphate = citrate + ATP + CoA. Functionally, catalyzes the formation of cytosolic acetyl-CoA, which is mainly used for the biosynthesis of fatty acids and sterols. In Schizosaccharomyces pombe (strain 972 / ATCC 24843) (Fission yeast), this protein is Probable ATP-citrate synthase subunit 1.